Reading from the N-terminus, the 159-residue chain is RNA pyrophosphohydrolase (159 aa).

The Nudix hydrolase domain occupies Gly6–Lys149. A Nudix box motif is present at residues Gly38–Gly59.

This sequence belongs to the Nudix hydrolase family. RppH subfamily. Requires a divalent metal cation as cofactor.

Functionally, accelerates the degradation of transcripts by removing pyrophosphate from the 5'-end of triphosphorylated RNA, leading to a more labile monophosphorylated state that can stimulate subsequent ribonuclease cleavage. The sequence is that of RNA pyrophosphohydrolase from Pseudomonas putida (strain ATCC 700007 / DSM 6899 / JCM 31910 / BCRC 17059 / LMG 24140 / F1).